Consider the following 94-residue polypeptide: Large ribosomal subunit protein bL25 (94 aa).

The protein belongs to the bacterial ribosomal protein bL25 family. Part of the 50S ribosomal subunit; part of the 5S rRNA/L5/L18/L25 subcomplex. Contacts the 5S rRNA. Binds to the 5S rRNA independently of L5 and L18.

In terms of biological role, this is one of the proteins that binds to the 5S RNA in the ribosome where it forms part of the central protuberance. This is Large ribosomal subunit protein bL25 from Escherichia coli O6:K15:H31 (strain 536 / UPEC).